A 97-amino-acid chain; its full sequence is Putative regulatory protein Dole_1911 (97 aa).

It belongs to the RemA family.

The polypeptide is Putative regulatory protein Dole_1911 (Desulfosudis oleivorans (strain DSM 6200 / JCM 39069 / Hxd3) (Desulfococcus oleovorans)).